The chain runs to 437 residues: UDP-glucosyl transferase 79L3 (437 aa).

His-18 serves as the catalytic Proton acceptor. The Charge relay role is filled by Asp-117. Residues Ser-254, Trp-312, Val-313, His-330, Ser-335, and Glu-338 each coordinate UDP.

The protein belongs to the UDP-glycosyltransferase family. Mainly expressed in flowers, flower buds and young leaves, and, to a lesser extent, in old leaves, stems and roots.

It functions in the pathway secondary metabolite biosynthesis; terpenoid biosynthesis. Its function is as follows. Component of the oleanane-type triterpene saponins (e.g. saponarioside A and saponarioside B) biosynthetic pathway, leading to the production of natural products with detergent properties used as traditional sources of soap. A glycosyltransferase that mediates the conversion of QA-triFR to QA-triFRX via the elongation of the C-28 sugar chain with a D-xylose. This is UDP-glucosyl transferase 79L3 from Saponaria officinalis (Common soapwort).